The sequence spans 610 residues: ABC transporter ATP-binding protein ARB1 (610 aa).

The disordered stretch occupies residues 1–43; the sequence is MPPVSASKAKRDAKKAEREAKKAAAGKTIRKLGRKKEAAAEES. Phosphoserine occurs at positions 43 and 65. ABC transporter domains follow at residues 82–323 and 393–610; these read IKLS…TNQM and LAFD…NVVL. Residue 114-121 participates in ATP binding; it reads GENGCGKS. Serine 196 carries the phosphoserine modification. Position 428–435 (428–435) interacts with ATP; the sequence is GPNGVGKS. Phosphothreonine is present on threonine 446.

This sequence belongs to the ABC transporter superfamily. ABCF family. EF3 subfamily. As to quaternary structure, interacts with LSG1.

The protein resides in the cytoplasm. It is found in the nucleus. It carries out the reaction ATP + H2O = ADP + phosphate + H(+). In terms of biological role, ATPase that stimulates 40S and 60S ribosome biogenesis. Also involved in ribosome-associated quality control (RQC) pathway, a pathway that mediates ubiquitination and extraction of incompletely synthesized nascent chains for proteasomal degradation: localizes to the ribosomal E-site and stimulates VMS1-dependent tRNA cleavage. The polypeptide is ABC transporter ATP-binding protein ARB1 (ARB1) (Saccharomyces cerevisiae (strain ATCC 204508 / S288c) (Baker's yeast)).